Here is a 443-residue protein sequence, read N- to C-terminus: Eukaryotic translation initiation factor 3 subunit E (443 aa).

Positions 249–417 (LDLFFNAGFI…GTVVMNHPPS (169 aa)) constitute a PCI domain.

It belongs to the eIF-3 subunit E family. As to quaternary structure, component of the eukaryotic translation initiation factor 3 (eIF-3) complex.

Its subcellular location is the cytoplasm. Component of the eukaryotic translation initiation factor 3 (eIF-3) complex, which is involved in protein synthesis of a specialized repertoire of mRNAs and, together with other initiation factors, stimulates binding of mRNA and methionyl-tRNAi to the 40S ribosome. The eIF-3 complex specifically targets and initiates translation of a subset of mRNAs involved in cell proliferation. In Neurospora crassa (strain ATCC 24698 / 74-OR23-1A / CBS 708.71 / DSM 1257 / FGSC 987), this protein is Eukaryotic translation initiation factor 3 subunit E (int-6).